Consider the following 314-residue polypeptide: Annexin-like protein RJ4 (314 aa).

Annexin repeat units follow at residues 10–81 (FCAK…RWTL), 82–153 (DPAD…ALVT), 165–236 (KLAN…TAIR), and 240–311 (DPKK…TLLG). 3 residues coordinate Ca(2+): G25, G27, and E67. The Ca(2+) site is built by I253, R255, G257, D297, and T298.

This sequence belongs to the annexin (TC 1.A.31.1) family. Predominantly in developing fruit.

The sequence is that of Annexin-like protein RJ4 from Fragaria ananassa (Strawberry).